We begin with the raw amino-acid sequence, 293 residues long: uncharacterized protein (293 aa).

An HTH lysR-type domain is found at 1–58 (MDLRRFITLKTVVEEGSFLRASQKLCCTQSTVTFHIQQLEQEFSVQLFEKIGRRMCLT). A DNA-binding region (H-T-H motif) is located at residues 18 to 37 (FLRASQKLCCTQSTVTFHIQ).

This sequence belongs to the LysR transcriptional regulatory family.

This is an uncharacterized protein from Escherichia coli (strain K12).